A 465-amino-acid chain; its full sequence is Chromosomal replication initiator protein DnaA (465 aa).

Residues 1 to 87 (MLWTDCLTRL…RPGSILSSSE (87 aa)) form a domain I, interacts with DnaA modulators region. The interval 81–123 (SILSSSEQPATTTAALQTAPIPQPAKVKREPEPVANTAVSSKS) is disordered. Residues 88-100 (QPATTTAALQTAP) show a composition bias toward low complexity. The domain II stretch occupies residues 88 to 127 (QPATTTAALQTAPIPQPAKVKREPEPVANTAVSSKSSKKK). The tract at residues 128–345 (LLNPQFTFSL…GALNKVVAIS (218 aa)) is domain III, AAA+ region. ATP-binding residues include Gly-173, Gly-175, Lys-176, and Thr-177. Residues 346 to 465 (RFKGAPIDLD…YKNLLRLLQS (120 aa)) are domain IV, binds dsDNA.

Belongs to the DnaA family. In terms of assembly, oligomerizes as a right-handed, spiral filament on DNA at oriC.

Its subcellular location is the cytoplasm. In terms of biological role, plays an essential role in the initiation and regulation of chromosomal replication. ATP-DnaA binds to the origin of replication (oriC) to initiate formation of the DNA replication initiation complex once per cell cycle. Binds the DnaA box (a 9 base pair repeat at the origin) and separates the double-stranded (ds)DNA. Forms a right-handed helical filament on oriC DNA; dsDNA binds to the exterior of the filament while single-stranded (ss)DNA is stabiized in the filament's interior. The ATP-DnaA-oriC complex binds and stabilizes one strand of the AT-rich DNA unwinding element (DUE), permitting loading of DNA polymerase. After initiation quickly degrades to an ADP-DnaA complex that is not apt for DNA replication. Binds acidic phospholipids. The protein is Chromosomal replication initiator protein DnaA of Acinetobacter baumannii (strain ATCC 17978 / DSM 105126 / CIP 53.77 / LMG 1025 / NCDC KC755 / 5377).